The chain runs to 81 residues: Exodeoxyribonuclease 7 small subunit (81 aa).

Residues Lys-59 to Glu-81 form a disordered region. Basic and acidic residues predominate over residues Leu-60–Leu-70. Over residues Asp-71 to Glu-81 the composition is skewed to polar residues.

Belongs to the XseB family. As to quaternary structure, heterooligomer composed of large and small subunits.

Its subcellular location is the cytoplasm. It carries out the reaction Exonucleolytic cleavage in either 5'- to 3'- or 3'- to 5'-direction to yield nucleoside 5'-phosphates.. Its function is as follows. Bidirectionally degrades single-stranded DNA into large acid-insoluble oligonucleotides, which are then degraded further into small acid-soluble oligonucleotides. The chain is Exodeoxyribonuclease 7 small subunit from Lactobacillus gasseri (strain ATCC 33323 / DSM 20243 / BCRC 14619 / CIP 102991 / JCM 1131 / KCTC 3163 / NCIMB 11718 / NCTC 13722 / AM63).